The primary structure comprises 290 residues: 33 kDa chaperonin (290 aa).

2 disulfide bridges follow: Cys235–Cys237 and Cys268–Cys271.

It belongs to the HSP33 family. Post-translationally, under oxidizing conditions two disulfide bonds are formed involving the reactive cysteines. Under reducing conditions zinc is bound to the reactive cysteines and the protein is inactive.

The protein resides in the cytoplasm. In terms of biological role, redox regulated molecular chaperone. Protects both thermally unfolding and oxidatively damaged proteins from irreversible aggregation. Plays an important role in the bacterial defense system toward oxidative stress. This is 33 kDa chaperonin from Streptococcus pneumoniae (strain JJA).